The following is a 600-amino-acid chain: Proline--tRNA ligase (600 aa).

Belongs to the class-II aminoacyl-tRNA synthetase family. ProS type 1 subfamily. In terms of assembly, homodimer.

Its subcellular location is the cytoplasm. It catalyses the reaction tRNA(Pro) + L-proline + ATP = L-prolyl-tRNA(Pro) + AMP + diphosphate. Catalyzes the attachment of proline to tRNA(Pro) in a two-step reaction: proline is first activated by ATP to form Pro-AMP and then transferred to the acceptor end of tRNA(Pro). As ProRS can inadvertently accommodate and process non-cognate amino acids such as alanine and cysteine, to avoid such errors it has two additional distinct editing activities against alanine. One activity is designated as 'pretransfer' editing and involves the tRNA(Pro)-independent hydrolysis of activated Ala-AMP. The other activity is designated 'posttransfer' editing and involves deacylation of mischarged Ala-tRNA(Pro). The misacylated Cys-tRNA(Pro) is not edited by ProRS. The chain is Proline--tRNA ligase from Prochlorococcus marinus subsp. pastoris (strain CCMP1986 / NIES-2087 / MED4).